We begin with the raw amino-acid sequence, 491 residues long: Aspartyl/glutamyl-tRNA(Asn/Gln) amidotransferase subunit B (491 aa).

It belongs to the GatB/GatE family. GatB subfamily. In terms of assembly, heterotrimer of A, B and C subunits.

The enzyme catalyses L-glutamyl-tRNA(Gln) + L-glutamine + ATP + H2O = L-glutaminyl-tRNA(Gln) + L-glutamate + ADP + phosphate + H(+). The catalysed reaction is L-aspartyl-tRNA(Asn) + L-glutamine + ATP + H2O = L-asparaginyl-tRNA(Asn) + L-glutamate + ADP + phosphate + 2 H(+). Allows the formation of correctly charged Asn-tRNA(Asn) or Gln-tRNA(Gln) through the transamidation of misacylated Asp-tRNA(Asn) or Glu-tRNA(Gln) in organisms which lack either or both of asparaginyl-tRNA or glutaminyl-tRNA synthetases. The reaction takes place in the presence of glutamine and ATP through an activated phospho-Asp-tRNA(Asn) or phospho-Glu-tRNA(Gln). This chain is Aspartyl/glutamyl-tRNA(Asn/Gln) amidotransferase subunit B, found in Nostoc punctiforme (strain ATCC 29133 / PCC 73102).